Consider the following 343-residue polypeptide: 4-hydroxy-2-oxovalerate aldolase 1 (343 aa).

A Pyruvate carboxyltransferase domain is found at 8 to 260 (ITVHDMSLRD…ETGVDVFAIS (253 aa)). 16–17 (RD) contributes to the substrate binding site. Residue D17 participates in Mn(2+) binding. Catalysis depends on H20, which acts as the Proton acceptor. The substrate site is built by S170 and H199. Mn(2+) contacts are provided by H199 and H201. Position 290 (Y290) interacts with substrate.

The protein belongs to the 4-hydroxy-2-oxovalerate aldolase family.

It carries out the reaction (S)-4-hydroxy-2-oxopentanoate = acetaldehyde + pyruvate. In Burkholderia cenocepacia (strain ATCC BAA-245 / DSM 16553 / LMG 16656 / NCTC 13227 / J2315 / CF5610) (Burkholderia cepacia (strain J2315)), this protein is 4-hydroxy-2-oxovalerate aldolase 1 (bphI).